Here is a 124-residue protein sequence, read N- to C-terminus: UPF0292 protein AF_0905 (124 aa).

In terms of domain architecture, Toprim spans 21-98; it reads GWVVVVEGKK…IPDVEIKRKI (78 aa). The Mg(2+) site is built by glutamate 27, aspartate 67, and aspartate 69.

The protein belongs to the UPF0292 family. It depends on Mg(2+) as a cofactor.

The polypeptide is UPF0292 protein AF_0905 (Archaeoglobus fulgidus (strain ATCC 49558 / DSM 4304 / JCM 9628 / NBRC 100126 / VC-16)).